The chain runs to 203 residues: Outer-membrane lipoprotein LolB (203 aa).

A signal peptide spans 1-17 (MNRLFRLLPLASLVLTA). Residue Cys-18 is the site of N-palmitoyl cysteine attachment. Residue Cys-18 is the site of S-diacylglycerol cysteine attachment.

The protein belongs to the LolB family. Monomer.

The protein localises to the cell outer membrane. In terms of biological role, plays a critical role in the incorporation of lipoproteins in the outer membrane after they are released by the LolA protein. In Klebsiella pneumoniae subsp. pneumoniae (strain ATCC 700721 / MGH 78578), this protein is Outer-membrane lipoprotein LolB.